A 433-amino-acid polypeptide reads, in one-letter code: Adenylosuccinate synthetase (433 aa).

Residues 11–17 (GDEGKGK) and 39–41 (GHT) contribute to the GTP site. Aspartate 12 acts as the Proton acceptor in catalysis. 2 residues coordinate Mg(2+): aspartate 12 and glycine 39. IMP contacts are provided by residues 12–15 (DEGK), 37–40 (NAGH), threonine 134, arginine 148, asparagine 230, threonine 245, and arginine 309. Catalysis depends on histidine 40, which acts as the Proton donor. 305-311 (VTTGRKR) contributes to the substrate binding site. Residues arginine 311, 337 to 339 (KLD), and 419 to 421 (GTG) each bind GTP.

It belongs to the adenylosuccinate synthetase family. Homodimer. It depends on Mg(2+) as a cofactor.

Its subcellular location is the cytoplasm. It catalyses the reaction IMP + L-aspartate + GTP = N(6)-(1,2-dicarboxyethyl)-AMP + GDP + phosphate + 2 H(+). The protein operates within purine metabolism; AMP biosynthesis via de novo pathway; AMP from IMP: step 1/2. In terms of biological role, plays an important role in the de novo pathway and in the salvage pathway of purine nucleotide biosynthesis. Catalyzes the first committed step in the biosynthesis of AMP from IMP. The chain is Adenylosuccinate synthetase from Saccharomyces cerevisiae (strain JAY291) (Baker's yeast).